The chain runs to 438 residues: Glutaryl-CoA dehydrogenase, mitochondrial (438 aa).

Residues 1-44 constitute a mitochondrion transit peptide; it reads MALRGVYAQLLNRGPGLRVFRSWSSATAQTEKGEKTQSRSAKPS. Substrate-binding positions include 138–139 and Ser186; that span reads RS. FAD contacts are provided by residues 177 to 186, Ser186, and 212 to 214; these read FGLTEPNHGS and WIT. Lys240 bears the N6-acetyllysine mark. Residue 287–294 coordinates substrate; the sequence is FGCLNNAR. FAD is bound by residues Arg319, Gln330, and 387 to 391; that span reads DMLGG. Glu414 (proton acceptor) is an active-site residue. Gly415 contacts substrate. FAD is bound by residues Thr416, 416–418, and Phe434; that span reads THD.

The protein belongs to the acyl-CoA dehydrogenase family. In terms of assembly, homotetramer. Requires FAD as cofactor.

The protein localises to the mitochondrion matrix. It catalyses the reaction glutaryl-CoA + oxidized [electron-transfer flavoprotein] + 2 H(+) = (2E)-butenoyl-CoA + reduced [electron-transfer flavoprotein] + CO2. It functions in the pathway amino-acid metabolism; lysine degradation. The protein operates within amino-acid metabolism; tryptophan metabolism. Functionally, catalyzes the oxidative decarboxylation of glutaryl-CoA to crotonyl-CoA and CO(2) in the degradative pathway of L-lysine, L-hydroxylysine, and L-tryptophan metabolism. It uses electron transfer flavoprotein as its electron acceptor. In Bos taurus (Bovine), this protein is Glutaryl-CoA dehydrogenase, mitochondrial (GCDH).